A 336-amino-acid chain; its full sequence is Dihydroorotate dehydrogenase (quinone) (336 aa).

FMN-binding positions include 62-66 (AGLDK) and Thr86. Residue Lys66 coordinates substrate. Substrate is bound at residue 111 to 115 (NRMGF). FMN contacts are provided by Asn139 and Asn172. Asn172 contacts substrate. The active-site Nucleophile is Ser175. Asn177 contributes to the substrate binding site. The FMN site is built by Lys217 and Thr245. 246–247 (NT) provides a ligand contact to substrate. FMN is bound by residues Gly268, Gly297, and 318–319 (YS).

Belongs to the dihydroorotate dehydrogenase family. Type 2 subfamily. As to quaternary structure, monomer. Requires FMN as cofactor.

It is found in the cell membrane. The catalysed reaction is (S)-dihydroorotate + a quinone = orotate + a quinol. Its pathway is pyrimidine metabolism; UMP biosynthesis via de novo pathway; orotate from (S)-dihydroorotate (quinone route): step 1/1. Functionally, catalyzes the conversion of dihydroorotate to orotate with quinone as electron acceptor. This chain is Dihydroorotate dehydrogenase (quinone), found in Aliivibrio fischeri (strain ATCC 700601 / ES114) (Vibrio fischeri).